The following is a 113-amino-acid chain: U11-theraphotoxin-Hhn1a (113 aa).

An N-terminal signal peptide occupies residues 1-21 (MNTVRVTFLLVFVLAVSLGQA). The propeptide occupies 22-74 (DKDENRMEMQEKTEQGKSYLDFAENLLLQKLEELEAKLLEEDSEESRNSRQKR). Positions 61–83 (EEDSEESRNSRQKRCIGEGVPCD) are disordered. Intrachain disulfides connect Cys-75–Cys-90, Cys-82–Cys-95, and Cys-89–Cys-110.

The protein belongs to the neurotoxin 14 (magi-1) family. 01 (HNTX-16) subfamily. Expressed by the venom gland.

It is found in the secreted. Functionally, probable ion channel inhibitor. The protein is U11-theraphotoxin-Hhn1a of Cyriopagopus hainanus (Chinese bird spider).